A 1483-amino-acid polypeptide reads, in one-letter code: Guanylyl cyclase, membrane (1483 aa).

The next 6 membrane-spanning stretches (helical) occupy residues 50-70 (ISII…YISP), 143-163 (FILR…TFTA), 168-188 (LWKL…LIFE), 198-218 (MVLL…PSML), 219-239 (ASGG…QIAG), and 242-262 (MVLL…ISRF). The tract at residues 323–376 (KKDEESNLTGKKQSKVVVSPPPPPTAAAPQQQDNEISTPQNSRKIVDPQSPSSL) is disordered. The segment covering 355 to 376 (DNEISTPQNSRKIVDPQSPSSL) has biased composition (polar residues). The 123-residue stretch at 395 to 517 (TVLFCEIVNF…DTINTSSRMA (123 aa)) folds into the Guanylate cyclase 1 domain. Disordered regions lie at residues 598–619 (NNTI…THPN) and 672–838 (LTSP…GDDF). Residues 610–619 (GSATGPTHPN) are compositionally biased toward polar residues. Low complexity-rich tracts occupy residues 672 to 684 (LTSP…PQQS), 693 to 712 (SPRL…SSST), and 720 to 765 (NNNN…NNNN). Polar residues predominate over residues 772-786 (SPISQNTTPTGSLSL). Transmembrane regions (helical) follow at residues 907-927 (ILAS…VDYF), 982-1002 (IITG…YVVS), 1016-1036 (VVMV…SVPP), 1040-1060 (IPLD…CYNF), 1061-1081 (SGIK…FIEI), and 1094-1114 (IYLS…ITSY). The 129-residue stretch at 1168–1296 (TIFLSDIVGF…ESVQITQQME (129 aa)) folds into the Guanylate cyclase 2 domain. Positions 1173, 1174, and 1217 each coordinate Mg(2+). 2 disordered regions span residues 1348–1369 (QPEV…SLQY) and 1393–1483 (NQND…SESS). Over residues 1354 to 1369 (RSVSVSKSNFGGSLQY) the composition is skewed to polar residues. The span at 1405-1416 (NENGNESSSSNI) shows a compositional bias: low complexity. A compositionally biased stretch (acidic residues) spans 1432 to 1444 (NEDDESSYEDDQE). The span at 1446 to 1465 (NQYLNNSENNKNNNNNSNQI) shows a compositional bias: low complexity.

The protein belongs to the adenylyl cyclase class-4/guanylyl cyclase family. As to quaternary structure, homodimer. Mg(2+) is required as a cofactor.

It localises to the membrane. The catalysed reaction is GTP = 3',5'-cyclic GMP + diphosphate. Its activity is regulated as follows. Activated by guanosine 5'-3-O-(thio)triphosphate (GTPgammaS). Inhibited by calcium. Functionally, synthesizes cyclic GMP (cGMP) from GTP, after activation by heterotrimeric or monomeric G proteins. Involved in chemotaxis. This chain is Guanylyl cyclase, membrane (gca), found in Dictyostelium discoideum (Social amoeba).